The sequence spans 642 residues: Transmembrane 9 superfamily member 4 (642 aa).

Residues 1–23 (MATAMDWLPWSLLLFSLMCETSA) form the signal peptide. Topologically, residues 24–281 (FYVPGVAPIN…TMSDVQIHWF (258 aa)) are extracellular. A helical transmembrane segment spans residues 282 to 302 (SIINSVVVVFFLSGILSMIII). The Cytoplasmic segment spans residues 303–346 (RTLRKDIANYNKEDDIEDTMEESGWKLVHGDVFRPPQYPMILSS). At tyrosine 312 the chain carries Phosphotyrosine. The chain crosses the membrane as a helical span at residues 347–367 (LLGSGIQLFCMILIVIFVAML). At 368–376 (GMLSPSSRG) the chain is on the extracellular side. A helical transmembrane segment spans residues 377 to 397 (ALMTTACFLFMFMGVFGGFSA). Over 398-416 (GRLYRTLKGHRWKKGAFCT) the chain is Cytoplasmic. The helical transmembrane segment at 417–437 (ATLYPGVVFGICFVLNCFIWG) threads the bilayer. At 438 to 449 (KHSSGAVPFPTM) the chain is on the extracellular side. Residues 450–470 (VALLCMWFGISLPLVYLGYYF) form a helical membrane-spanning segment. Residues 471–501 (GFRKQPYDNPVRTNQIPRQIPEQRWYMNRFV) lie on the Cytoplasmic side of the membrane. Residues 502 to 522 (GILMAGILPFGAMFIELFFIF) form a helical membrane-spanning segment. Residues 523–535 (SAIWENQFYYLFG) are Extracellular-facing. Residues 536–556 (FLFLVFIILVVSCSQISIVMV) form a helical membrane-spanning segment. Over 557 to 570 (YFQLCAEDYRWWWR) the chain is Cytoplasmic. A helical membrane pass occupies residues 571–591 (NFLVSGGSAFYVLVYAIFYFV). Over 592–598 (NKLDIVE) the chain is Extracellular. Residues 599–619 (FIPSLLYFGYTALMVLSFWLL) form a helical membrane-spanning segment. Over 620-642 (TGTIGFYAAYMFVRKIYAAVKID) the chain is Cytoplasmic.

It belongs to the nonaspanin (TM9SF) (TC 9.A.2) family. Interacts with ATP6V1H in colon cancer cells. In terms of tissue distribution, highly expressed in metastatic melanoma cells whereas it is undetectable in primary melanoma cells, healthy skin tissues and peripheral blood lymphocytes. Expressed in CD34(+) hematopoietic progenitor cells and during monocyte and granulocyte differentiation. Overexpressed in acute myeloid leukemia, in particular in those displaying granulocytic differentiation (at protein level).

It localises to the membrane. It is found in the golgi apparatus. The protein resides in the early endosome. Functionally, associates with proteins harboring glycine-rich transmembrane domains and ensures their efficient localization to the cell surface. Regulates the assembly and activity of V-ATPase in colon cancer cells via its interaction with V-type proton ATPase subunit H (ATP6V1H) and contributes to V-ATPase-mediated pH alterations in cancer cells which play an important role in drug resistance and invasiveness of colon cancer cells. Plays an important role in an atypical phagocytic activity of metastatic melanoma cells called cannibalism and is involved in the pH regulation of the intracellular vesicles in tumor cells. This Homo sapiens (Human) protein is Transmembrane 9 superfamily member 4 (TM9SF4).